The sequence spans 1240 residues: DNA polymerase II large subunit (1240 aa).

It belongs to the archaeal DNA polymerase II family. As to quaternary structure, heterodimer of a large subunit and a small subunit.

The enzyme catalyses DNA(n) + a 2'-deoxyribonucleoside 5'-triphosphate = DNA(n+1) + diphosphate. It catalyses the reaction Exonucleolytic cleavage in the 3'- to 5'-direction to yield nucleoside 5'-phosphates.. Functionally, possesses two activities: a DNA synthesis (polymerase) and an exonucleolytic activity that degrades single-stranded DNA in the 3'- to 5'-direction. Has a template-primer preference which is characteristic of a replicative DNA polymerase. The sequence is that of DNA polymerase II large subunit from Methanopyrus kandleri (strain AV19 / DSM 6324 / JCM 9639 / NBRC 100938).